The sequence spans 727 residues: MIVKSLSLLALAAATVEGCVRERDVGSVDILSVLSKRGHGHPHLPHLSKYESMLINSFDNTTVDSWAYYYTHGIHIAGTNQSMAQWTADKWTEFGIPSSLVSYDVYLNYPVSHSLSLTHPDGTTWEASLVEDVLKEDDTTSYPDRIPTFHGYSASGEATAEYVYVGRGQKVDFERLIQLGVDLKGKIAIARYGGPFRGLKVKNAQDQGMIGCIIFTDPADDGNVTVANGLKAYPNGPARNPSAVQRGSVQFLSMFPGDPTTPGYPSRPDSPRKDKSPVVPKIPSIPISQLDAQPILAALDGHGTPGKEVNRTRWVGALNATYATGPAPGAKLSMSNVMRDTYTPIWNSIGIINGTEQDEVVIIGNHRDAWIIGGAGDPNSGSSIMVELAKAFGKLQKAGWKPKRTIVMCSWDAEEYGLVGSTEWVEEYLPWLKASAVAYLNIDVAVSGPVPDLSATPELHKLALESMKKVIWPYKGRQDTTMYDVWNTASGGEVGVLGSGSDYTAFVHNGIASLDTGAGGDGNTDPVYHYHSNYDSYHWMATYGDPGFHTHVAMGQFLGLLGYHLATDDIIPFDVTNYGVQMTKYLDVLKKYIAASKFPDLDVSKIESAICSFNVSANAVAKLQKKAEHNVHDQQLRKHLNTIYRDFGRGFVSQGGLPDREFYRHMLYAPGLDTGYAPTTFPGVTESLDAGNRTRAVEYIERASNAIYVAAGILSSCHDCNQFVAQE.

An N-terminal signal peptide occupies residues 1–18 (MIVKSLSLLALAAATVEG). Asparagine 60 and asparagine 80 each carry an N-linked (GlcNAc...) asparagine glycan. Positions 158–296 (ATAEYVYVGR…ISQLDAQPIL (139 aa)) constitute a PA domain. Arginine 197 is a substrate binding site. Residue asparagine 223 is glycosylated (N-linked (GlcNAc...) asparagine). The disordered stretch occupies residues 255-279 (FPGDPTTPGYPSRPDSPRKDKSPVV). Ca(2+) is bound by residues threonine 261 and tyrosine 264. An NAALADase region spans residues 266–565 (SRPDSPRKDK…QFLGLLGYHL (300 aa)). 3 N-linked (GlcNAc...) asparagine glycosylation sites follow: asparagine 310, asparagine 319, and asparagine 353. Histidine 366 is a Zn(2+) binding site. The For NAALADase activity role is filled by glutamate 414. A Zn(2+)-binding site is contributed by glutamate 415. Ca(2+)-binding residues include glutamate 423 and glutamate 426. Position 443 (aspartate 443) interacts with Zn(2+). Substrate contacts are provided by residues 516-518 (TGA) and tyrosine 530. Histidine 531 lines the Zn(2+) pocket. Serine 604 (charge relay system) is an active-site residue. Asparagine 614 is a glycosylation site (N-linked (GlcNAc...) asparagine). The active-site Charge relay system is the histidine 665. Residue 675 to 676 (GY) coordinates substrate. The N-linked (GlcNAc...) asparagine glycan is linked to asparagine 692.

Belongs to the peptidase M28 family. M28B subfamily. The cofactor is Zn(2+).

It is found in the secreted. The catalysed reaction is Release of an unsubstituted, C-terminal glutamyl residue, typically from Ac-Asp-Glu or folylpoly-gamma-glutamates.. Its function is as follows. Has both folate hydrolase and N-acetylated-alpha-linked-acidic dipeptidase (NAALADase) activity. Also exhibits a dipeptidyl-peptidase IV type activity. In Arthroderma benhamiae (strain ATCC MYA-4681 / CBS 112371) (Trichophyton mentagrophytes), this protein is Probable glutamate carboxypeptidase ARB_02390.